The following is a 282-amino-acid chain: Energy-coupling factor transporter ATP-binding protein EcfA1 (282 aa).

Positions 6–243 constitute an ABC transporter domain; it reads VTVKHLSFTY…EVLIKSAGLE (238 aa). An ATP-binding site is contributed by 40–47; it reads GHNGSGKS.

The protein belongs to the ABC transporter superfamily. Energy-coupling factor EcfA family. In terms of assembly, forms a stable energy-coupling factor (ECF) transporter complex composed of 2 membrane-embedded substrate-binding proteins (S component), 2 ATP-binding proteins (A component) and 2 transmembrane proteins (T component).

Its subcellular location is the cell membrane. Functionally, ATP-binding (A) component of a common energy-coupling factor (ECF) ABC-transporter complex. Unlike classic ABC transporters this ECF transporter provides the energy necessary to transport a number of different substrates. The sequence is that of Energy-coupling factor transporter ATP-binding protein EcfA1 from Lactobacillus johnsonii (strain CNCM I-12250 / La1 / NCC 533).